A 424-amino-acid polypeptide reads, in one-letter code: L-glutamine:scyllo-inosose aminotransferase (424 aa).

Residues 1 to 21 form a disordered region; it reads MDSSLAISGGPRLSNREWPRW. The residue at position 202 (lysine 202) is an N6-(pyridoxal phosphate)lysine.

It belongs to the DegT/DnrJ/EryC1 family. L-glutamine:2-deoxy-scyllo-inosose/scyllo-inosose aminotransferase subfamily. Homodimer. The cofactor is pyridoxal 5'-phosphate.

It carries out the reaction scyllo-inosose + L-glutamine = 1-amino-1-deoxy-scyllo-inositol + 2-oxoglutaramate. Its pathway is antibiotic biosynthesis; streptomycin biosynthesis. Its function is as follows. Catalyzes the PLP-dependent transamination of scyllo-inosose to form scyllo-inosamine. The protein is L-glutamine:scyllo-inosose aminotransferase (stsC) of Streptomyces griseus.